Reading from the N-terminus, the 169-residue chain is Ribosome maturation factor RimM (169 aa).

Residues 95-168 (EGNYYIFQIV…KMKVELLEGL (74 aa)) form the PRC barrel domain.

The protein belongs to the RimM family. As to quaternary structure, binds ribosomal protein uS19.

It localises to the cytoplasm. In terms of biological role, an accessory protein needed during the final step in the assembly of 30S ribosomal subunit, possibly for assembly of the head region. Essential for efficient processing of 16S rRNA. May be needed both before and after RbfA during the maturation of 16S rRNA. It has affinity for free ribosomal 30S subunits but not for 70S ribosomes. The chain is Ribosome maturation factor RimM from Desulforamulus reducens (strain ATCC BAA-1160 / DSM 100696 / MI-1) (Desulfotomaculum reducens).